Reading from the N-terminus, the 199-residue chain is dITP/XTP pyrophosphatase (199 aa).

Residue T7 to K12 coordinates substrate. D71 serves as the catalytic Proton acceptor. Position 71 (D71) interacts with Mg(2+). Residues A72, F154–D157, K177, and H182–R183 contribute to the substrate site.

It belongs to the HAM1 NTPase family. In terms of assembly, homodimer. Requires Mg(2+) as cofactor.

It catalyses the reaction XTP + H2O = XMP + diphosphate + H(+). The catalysed reaction is dITP + H2O = dIMP + diphosphate + H(+). The enzyme catalyses ITP + H2O = IMP + diphosphate + H(+). Functionally, pyrophosphatase that catalyzes the hydrolysis of nucleoside triphosphates to their monophosphate derivatives, with a high preference for the non-canonical purine nucleotides XTP (xanthosine triphosphate), dITP (deoxyinosine triphosphate) and ITP. Seems to function as a house-cleaning enzyme that removes non-canonical purine nucleotides from the nucleotide pool, thus preventing their incorporation into DNA/RNA and avoiding chromosomal lesions. This is dITP/XTP pyrophosphatase from Bdellovibrio bacteriovorus (strain ATCC 15356 / DSM 50701 / NCIMB 9529 / HD100).